Reading from the N-terminus, the 290-residue chain is UPF0750 membrane protein YdeO (290 aa).

The next 5 membrane-spanning stretches (helical) occupy residues 18-38 (IIMV…VLIP), 56-76 (LFNL…VWLG), 83-103 (SFAL…SFFH), 112-132 (DTLL…GLAL), and 165-185 (LFVF…LSVI).

The protein belongs to the UPF0750 family.

The protein localises to the cell membrane. In Bacillus subtilis (strain 168), this protein is UPF0750 membrane protein YdeO (ydeO).